A 525-amino-acid polypeptide reads, in one-letter code: Glutamate--cysteine ligase (525 aa).

It belongs to the glutamate--cysteine ligase type 1 family. Type 1 subfamily.

The enzyme catalyses L-cysteine + L-glutamate + ATP = gamma-L-glutamyl-L-cysteine + ADP + phosphate + H(+). The protein operates within sulfur metabolism; glutathione biosynthesis; glutathione from L-cysteine and L-glutamate: step 1/2. This chain is Glutamate--cysteine ligase, found in Vibrio vulnificus (strain YJ016).